A 206-amino-acid polypeptide reads, in one-letter code: Venom allergen 5 2 (206 aa).

Disulfide bonds link Cys4-Cys16, Cys8-Cys104, Cys28-Cys96, and Cys172-Cys189. Positions Asp48–Tyr191 constitute an SCP domain.

The protein belongs to the CRISP family. Venom allergen 5-like subfamily. Expressed by the venom gland.

It is found in the secreted. The polypeptide is Venom allergen 5 2 (Polybia paulista (Neotropical social wasp)).